Consider the following 847-residue polypeptide: DNA mismatch repair protein MutS (847 aa).

603 to 610 lines the ATP pocket; the sequence is GPNMSGKS.

Belongs to the DNA mismatch repair MutS family.

Functionally, this protein is involved in the repair of mismatches in DNA. It is possible that it carries out the mismatch recognition step. This protein has a weak ATPase activity. In Streptococcus suis (strain 98HAH33), this protein is DNA mismatch repair protein MutS.